The following is a 356-amino-acid chain: MSLVSDLINLNLSDSTDKIIAEYIWVGGSGMDMRSKARTLPGPVTDPSQLPKWNYDGSSTGQAPGEDSEVILYPQAIFKDPFRRGNNILVMCDAYTPAGEPIPTNKRHAAAKVFSNPDVAAEVPWYGIEQEYTLLQKDVKWPVGWPIGGYPGPQGPYYCGIGADKSFGRDVVDSHYKACLYAGINISGINGEVMPGQWEFQVGPAVGISAADEIWVARYILERITEIAGVVVSFDPKPIPGDWNGAGAHCNYSTKSMREEGGYEIIKKAIDKLGLRHKEHIAAYGEGNERRLTGHHETADINTFLWGVANRGASIRVGRDTEKEGKGYFEDRRPASNMDPYIVTSMIAETTILWNP.

Ser-2 carries the post-translational modification N-acetylserine. A phosphoserine mark is found at Ser-2 and Ser-48. The region spanning 19 to 99 (IIAEYIWVGG…VMCDAYTPAG (81 aa)) is the GS beta-grasp domain. Positions 36–62 (KARTLPGPVTDPSQLPKWNYDGSSTGQ) are disordered. Residues 106 to 356 (KRHAAAKVFS…IAETTILWNP (251 aa)) enclose the GS catalytic domain.

This sequence belongs to the glutamine synthetase family. In terms of assembly, homooctamer. Interacts with CRK3 and GRF3. Phosphorylated by CRK3. Expressed in root tips, root hairs and epidermis. Ubiquitously expressed with higher levels in siliques and roots.

The protein localises to the cytoplasm. It carries out the reaction L-glutamate + NH4(+) + ATP = L-glutamine + ADP + phosphate + H(+). Its function is as follows. High-affinity glutamine synthetase which catalyzes the synthesis of glutamine from ammonium and glutamate. May contribute to the homeostatic control of glutamine synthesis in roots. The sequence is that of Glutamine synthetase cytosolic isozyme 1-1 (GLN1-1) from Arabidopsis thaliana (Mouse-ear cress).